A 212-amino-acid chain; its full sequence is Pyrrolidone-carboxylate peptidase (212 aa).

Catalysis depends on residues Glu78, Cys141, and His165.

The protein belongs to the peptidase C15 family. Homotetramer.

Its subcellular location is the cytoplasm. The catalysed reaction is Release of an N-terminal pyroglutamyl group from a polypeptide, the second amino acid generally not being Pro.. Its function is as follows. Removes 5-oxoproline from various penultimate amino acid residues except L-proline. The chain is Pyrrolidone-carboxylate peptidase (pcp) from Staphylococcus aureus.